A 162-amino-acid chain; its full sequence is NADH-quinone oxidoreductase subunit I (162 aa).

4Fe-4S ferredoxin-type domains are found at residues leucine 53 to aspartate 83 and threonine 93 to isoleucine 122. Cysteine 63, cysteine 66, cysteine 69, cysteine 73, cysteine 102, cysteine 105, cysteine 108, and cysteine 112 together coordinate [4Fe-4S] cluster.

This sequence belongs to the complex I 23 kDa subunit family. NDH-1 is composed of 14 different subunits. Subunits NuoA, H, J, K, L, M, N constitute the membrane sector of the complex. The cofactor is [4Fe-4S] cluster.

It is found in the cell inner membrane. The enzyme catalyses a quinone + NADH + 5 H(+)(in) = a quinol + NAD(+) + 4 H(+)(out). Its function is as follows. NDH-1 shuttles electrons from NADH, via FMN and iron-sulfur (Fe-S) centers, to quinones in the respiratory chain. The immediate electron acceptor for the enzyme in this species is believed to be ubiquinone. Couples the redox reaction to proton translocation (for every two electrons transferred, four hydrogen ions are translocated across the cytoplasmic membrane), and thus conserves the redox energy in a proton gradient. In Bordetella avium (strain 197N), this protein is NADH-quinone oxidoreductase subunit I.